Consider the following 105-residue polypeptide: Dynein axonemal light chain 4 (105 aa).

Belongs to the dynein light chain family. In terms of assembly, consists of at least two heavy chains and a number of intermediate and light chains.

It localises to the cytoplasm. Its subcellular location is the cytoskeleton. It is found in the cilium axoneme. Force generating protein of respiratory cilia. Produces force towards the minus ends of microtubules. Dynein has ATPase activity. The protein is Dynein axonemal light chain 4 (DNAL4) of Bos taurus (Bovine).